The sequence spans 88 residues: Sec-independent protein translocase protein TatA (88 aa).

The helical transmembrane segment at 1–21 (MGGISIWQLLIIAVIVVLLFG) threads the bilayer. Positions 41 to 88 (KAMGDENQKETNNAEKTTNDADFDTKNLAQKTSTEEKSTTESKNKEQV) are disordered. Composition is skewed to basic and acidic residues over residues 42 to 65 (AMGD…DFDT) and 73 to 88 (STEE…KEQV).

This sequence belongs to the TatA/E family. In terms of assembly, the Tat system comprises two distinct complexes: a TatABC complex, containing multiple copies of TatA, TatB and TatC subunits, and a separate TatA complex, containing only TatA subunits. Substrates initially bind to the TatABC complex, which probably triggers association of the separate TatA complex to form the active translocon.

Its subcellular location is the cell inner membrane. Its function is as follows. Part of the twin-arginine translocation (Tat) system that transports large folded proteins containing a characteristic twin-arginine motif in their signal peptide across membranes. TatA could form the protein-conducting channel of the Tat system. This is Sec-independent protein translocase protein TatA from Proteus mirabilis (strain HI4320).